The chain runs to 569 residues: Falcipain-1 (569 aa).

The Cytoplasmic portion of the chain corresponds to 1-35 (MVAIKEMKEFAFARPSLVETLNKKKKFLKKKEKRT). A propeptide spans 1 to 332 (MVAIKEMKEF…KRNEKDIFSK (332 aa)) (activation peptide). A helical; Signal-anchor for type II membrane protein transmembrane segment spans residues 36–56 (FVLSIYAFITFIIFCIGILYF). The Lumenal segment spans residues 57-569 (TNKSSAHNNN…IGEEVFYPIL (513 aa)). Asn-58, Asn-98, Asn-121, and Asn-127 each carry an N-linked (GlcNAc...) asparagine glycan. Residues 97-118 (LNESSNEEDEEKYTLNSETYNN) are disordered. Intrachain disulfides connect Cys-354/Cys-395, Cys-388/Cys-428, and Cys-413/Cys-433. Residue Cys-357 is part of the active site. N-linked (GlcNAc...) asparagine glycans are attached at residues Asn-479 and Asn-487. Residues Cys-482 and Cys-558 are joined by a disulfide bond. Active-site residues include His-488 and Asn-533.

It belongs to the peptidase C1 family. Contains disulfide bonds.

It localises to the membrane. The protein resides in the cytoplasmic granule. Its function is as follows. Cysteine protease. In the mosquito midgut, required for parasite development. This is Falcipain-1 from Plasmodium falciparum (isolate 3D7).